The chain runs to 212 residues: MIRSVLLRALAARPPSAPVPGHLHRCLLGTHRRKIKPEQLELPNQTREFVYSLSPETRSRLLKELQTFESKTEDSGEASRLTAAQLRYILLHNAIPFIGFGFLDNAIMIAAGTQIELSIGLTLGISTMAAAALGNLVSDLAGLGLAGYVEALAVRLGMQIPDLSPRQVDMWQTRVSSHMGKAIGVAIGCILGMFPLLFLSDEEDKKPKKDSN.

Over methionine 1–tyrosine 88 the chain is Cytoplasmic. A helical membrane pass occupies residues isoleucine 89 to isoleucine 109. Residues alanine 110–glutamate 116 lie on the Extracellular side of the membrane. Residues leucine 117–valine 137 traverse the membrane as a helical segment. At serine 138–aspartate 139 the chain is on the cytoplasmic side. A helical transmembrane segment spans residues leucine 140–isoleucine 160. At proline 161–histidine 178 the chain is on the extracellular side. A helical transmembrane segment spans residues methionine 179 to leucine 199. The Cytoplasmic portion of the chain corresponds to serine 200–asparagine 212.

Monomer. Homodimer. Interacts with GJA1. In terms of tissue distribution, expression is restricted to the heart (at protein level).

It localises to the cell membrane. The protein resides in the mitochondrion inner membrane. Functionally, essential for maintaining proper cardiac intercalated disk (ICD) structure and function. May regulate cardiac conduction and the function of the gap junction protein GJA1. May contribute to the stability and proper localization of GJA1 to cardiac intercalated disk thereby regulating gap junction communication. Regulates mitochondrial respiration and mitochondrial DNA copy number maintenance. The polypeptide is Transmembrane protein 65 (tmem65) (Danio rerio (Zebrafish)).